We begin with the raw amino-acid sequence, 525 residues long: Peptide chain release factor 3 (525 aa).

Residues 11–279 (DKRRTFAIIS…TYLEYAPQPA (269 aa)) form the tr-type G domain. Residues 20 to 27 (SHPDAGKT), 88 to 92 (DTPGH), and 142 to 145 (NKLD) contribute to the GTP site.

Belongs to the TRAFAC class translation factor GTPase superfamily. Classic translation factor GTPase family. PrfC subfamily.

It is found in the cytoplasm. Increases the formation of ribosomal termination complexes and stimulates activities of RF-1 and RF-2. It binds guanine nucleotides and has strong preference for UGA stop codons. It may interact directly with the ribosome. The stimulation of RF-1 and RF-2 is significantly reduced by GTP and GDP, but not by GMP. This chain is Peptide chain release factor 3, found in Levilactobacillus brevis (strain ATCC 367 / BCRC 12310 / CIP 105137 / JCM 1170 / LMG 11437 / NCIMB 947 / NCTC 947) (Lactobacillus brevis).